Reading from the N-terminus, the 213-residue chain is ATP phosphoribosyltransferase (213 aa).

This sequence belongs to the ATP phosphoribosyltransferase family. Short subfamily. As to quaternary structure, heteromultimer composed of HisG and HisZ subunits.

The protein localises to the cytoplasm. It catalyses the reaction 1-(5-phospho-beta-D-ribosyl)-ATP + diphosphate = 5-phospho-alpha-D-ribose 1-diphosphate + ATP. The protein operates within amino-acid biosynthesis; L-histidine biosynthesis; L-histidine from 5-phospho-alpha-D-ribose 1-diphosphate: step 1/9. Its function is as follows. Catalyzes the condensation of ATP and 5-phosphoribose 1-diphosphate to form N'-(5'-phosphoribosyl)-ATP (PR-ATP). Has a crucial role in the pathway because the rate of histidine biosynthesis seems to be controlled primarily by regulation of HisG enzymatic activity. The sequence is that of ATP phosphoribosyltransferase from Crocosphaera subtropica (strain ATCC 51142 / BH68) (Cyanothece sp. (strain ATCC 51142)).